The sequence spans 589 residues: Probable arginine--tRNA ligase, cytoplasmic (589 aa).

L-arginine is bound by residues 121 to 123, His-132, Tyr-332, Asp-336, and Gln-360; that span reads SPN. A 'HIGH' region motif is present at residues 121–132; that stretch reads SPNIAKPFHAGH. Residues 469–483 form an interaction with tRNA region; sequence DTGPYLQYAHARLCS.

The protein belongs to the class-I aminoacyl-tRNA synthetase family.

The protein resides in the cytoplasm. The protein localises to the cytosol. The catalysed reaction is tRNA(Arg) + L-arginine + ATP = L-arginyl-tRNA(Arg) + AMP + diphosphate. In terms of biological role, forms part of a macromolecular complex that catalyzes the attachment of specific amino acids to cognate tRNAs during protein synthesis. This chain is Probable arginine--tRNA ligase, cytoplasmic (argS1), found in Dictyostelium discoideum (Social amoeba).